The primary structure comprises 553 residues: Cytokine-like nuclear factor N-PAC (553 aa).

A PWWP domain is found at 8–66 (LGDLVWGKLGRYPPWPGKIVNPPKDLKKPRGKKCFFVKFFGTEDHAWIKVEQLKPYHLH). Composition is skewed to basic and acidic residues over residues 92–145 (KTKG…EGKK) and 162–182 (RAQD…KDLT). Positions 92 to 188 (KTKGKDQASS…KDLTIPESST (97 aa)) are disordered. Residues 168–180 (PRKRGRPPKDEKD) constitute a DNA-binding region (a.T hook). The tract at residues 214–217 (DPHF) is interaction with histone H3. The segment at 261–553 (GSITPTDKKI…MSAVYRAYIH (293 aa)) is dehydrogenase domain. NAD(+)-binding positions include 271–285 (GFLG…IVSN), Thr-362, and Lys-505.

It belongs to the HIBADH-related family. NP60 subfamily. As to quaternary structure, homotetramere. Binds to mononucleosomes.

It localises to the nucleus. The protein resides in the chromosome. Cytokine-like nuclear factor with chromatin gene reader activity involved in chromatin modification and regulation of gene expression. Acts as a nucleosome-destabilizing factor that is recruited to genes during transcriptional activation. Recognizes and binds histone H3 without a preference for specific epigenetic markers and also binds DNA. Interacts with KDM1B and promotes its histone demethylase activity by facilitating the capture of H3 tails, they form a multifunctional enzyme complex that modifies transcribed chromatin and facilitates Pol II transcription through nucleosomes. The chain is Cytokine-like nuclear factor N-PAC (GLYR1) from Gallus gallus (Chicken).